The following is a 1411-amino-acid chain: Protein ECM5 (1411 aa).

The JmjN domain occupies isoleucine 118 to phenylalanine 159. The ARID domain occupies arginine 185–glutamate 279. Residues arginine 285–proline 312 are disordered. The JmjC domain occupies lysine 476–serine 695. Residues threonine 1238 to proline 1290 form a PHD-type zinc finger.

The protein localises to the nucleus. Functionally, may be involved in cell wall organization and biogenesis. The protein is Protein ECM5 (ECM5) of Saccharomyces cerevisiae (strain ATCC 204508 / S288c) (Baker's yeast).